A 1074-amino-acid polypeptide reads, in one-letter code: MSLKSETRVNTSTLQKIAADMSNLIENLDTRELHFEGEEVEYDASPGDPKAQEGCIPFSSIYNTQGFKEPNIQTYLSGCPIKAQVLEVERFTSTSRVPSINLYTIELTHGEFTWQVKRKFKHFQEFHRELLKYKAFIRIPIPTKRHTFRRQNVKEEPREMPSLPRSSENAIQEEQFFGRRKQLEDYLTKILKMPMYRNYHATTEFLDVSQLSFIHDLGPKGLEGMIMKRSGGHRIPGVNCCGHGRACYRWSKRWLIVKDSFLLYMKPDSGAIAFVLLVDKEFRVKVGRKETETKYGLRIDNLSRTLILKCNSYRHARWWGGAIEEFIRKHGADFLKDHRFGSYAALHENTLAKWYVNAKGYFEDIANAMEEASEEIFITDWWLSPEIFLKRPVVEGNRWRLDCILKRKAQQGVRIFIMLYKEVELALGINSEYSKRTLMRLHPNIKVMRHPDHVSSSVYLWAHHEKLVIIDQSVAFVGGIDLAYGRWDDNEHRLTDVGSVKRVTSGLSLGSLTAASVESMESLSLKDKHEFHKKEPISKIVDETDMKLKGIGKSRKFSKFSLYRQLHRHHLHNADSISSIDSTSSYFSHCRSHQNLIHGLKPHLKLFHPSSESEQGLTRHSTDTGSIRSVQTGVGELHGETRFWHGKDYCNFVFKDWVQLDKPFADFIDRYSTPRMPWHDIGSVVHGKAARDVARHFIQRWNFTKIMKPKYRSLSYPFLLPKSQATAHELRYQVPGAVPAKVQLLRSAADWSAGIKHHEESIHAAYIHVIENSKHYIYIENQFFISCADDKVVFNKVGDRIAQRILKAHREGQRYRVYIVIPLLPGFEGDISTGGGNALQAIMHFNYRTMCRGESSILEQLKPELGNKWINYISFCGLRTHAELEGNLVTELIYVHSKLLIADDNTVIIGSANINDRSMLGKRDSEMAVIVQDTETVPSVMDGKEYQAGRFARDLRLECFRLVLGYLSDPSEDLQDPVSDKFFKEIWVSTAARNATIYDKVFRCLPNDEVHNLIQLRDFINKPILAKEDALRAEEELRKIRGFLVQFPLYFLSEENLLPSVGTKEAIVPMEVWT.

The 132-residue stretch at 81–212 (IKAQVLEVER…TEFLDVSQLS (132 aa)) folds into the PX domain. In terms of domain architecture, PH spans 219–328 (PKGLEGMIMK…WGGAIEEFIR (110 aa)). S-palmitoyl cysteine attachment occurs at residues C240 and C241. In terms of domain architecture, PLD phosphodiesterase 1 spans 459–486 (YLWAHHEKLVIIDQSVAFVGGIDLAYGR). The catalytic stretch occupies residues 463-928 (HHEKLVIIDQ…MLGKRDSEMA (466 aa)). A phosphoserine mark is found at S499, S561, and S629. One can recognise a PLD phosphodiesterase 2 domain in the interval 891-918 (ELIYVHSKLLIADDNTVIIGSANINDRS).

This sequence belongs to the phospholipase D family. As to quaternary structure, interacts with PIP5K1B. In terms of tissue distribution, expressed in kidney, lung, and at a much lower levels, in brain, liver, heart, testis and spleen.

It localises to the cytoplasm. The protein resides in the perinuclear region. Its subcellular location is the endoplasmic reticulum membrane. It is found in the golgi apparatus membrane. The protein localises to the late endosome membrane. The catalysed reaction is a 1,2-diacyl-sn-glycero-3-phosphocholine + H2O = a 1,2-diacyl-sn-glycero-3-phosphate + choline + H(+). It catalyses the reaction ethanol + a 1,2-diacyl-sn-glycero-3-phosphocholine = 1,2-diacyl-sn-glycero-3-phosphoethanol + choline. The enzyme catalyses 1,2-dihexadecanoyl-sn-glycero-3-phosphocholine + H2O = 1,2-dihexadecanoyl-sn-glycero-3-phosphate + choline + H(+). With respect to regulation, stimulated by phosphatidylinositol 4,5-bisphosphate and phosphatidylinositol 3,4,5-trisphosphate, activated by the phosphokinase C-alpha, by the ADP-ribosylation factor-1 (ARF-1), and to a lesser extent by GTP-binding proteins: RHO A, RAC-1 and CDC42. Inhibited by oleate. Function as phospholipase selectivefor phosphatidylcholine. Implicated as a critical step in numerous cellular pathways, including signal transduction, membrane trafficking, and the regulation of mitosis. May be involved in the regulation of perinuclear intravesicular membrane traffic. The sequence is that of Phospholipase D1 from Mus musculus (Mouse).